We begin with the raw amino-acid sequence, 485 residues long: Glutathione gamma-glutamylcysteinyltransferase 1 (485 aa).

Residues 1–221 (MAMASLYRRS…GFMLISRPHR (221 aa)) form the Peptidase C83 domain. Active-site residues include Cys56, His162, and Asp180.

This sequence belongs to the phytochelatin synthase family. As to expression, expressed in roots and shoots.

The enzyme catalyses [Glu(-Cys)](n)-Gly + glutathione + H(+) = [Glu(-Cys)](n+1)-Gly + glycine. Its activity is regulated as follows. Requires cadmium for activity. Also activated in vitro or in heterologous system by Ag(+), Hg(+), Zn(2+), Cu(2+), Fe(2+) or Fe(3+) ions, but not by Co(2+) or Ni(2+) ions. Its function is as follows. Involved in the synthesis of phytochelatins (PC) and homophytochelatins (hPC), the heavy-metal-binding peptides of plants. Also involved in glutathione-conjugates degradation. This chain is Glutathione gamma-glutamylcysteinyltransferase 1 (PCS1), found in Arabidopsis thaliana (Mouse-ear cress).